A 353-amino-acid polypeptide reads, in one-letter code: Probable dual-specificity RNA methyltransferase RlmN (353 aa).

Glu-95 serves as the catalytic Proton acceptor. A Radical SAM core domain is found at 103–333 (DGGRKTICIS…PILNRRSPGR (231 aa)). An intrachain disulfide couples Cys-110 to Cys-339. Residues Cys-117, Cys-121, and Cys-124 each contribute to the [4Fe-4S] cluster site. Residues 164-165 (GE), Ser-196, 219-221 (SLN), and Asn-296 each bind S-adenosyl-L-methionine. The active-site S-methylcysteine intermediate is Cys-339.

This sequence belongs to the radical SAM superfamily. RlmN family. [4Fe-4S] cluster serves as cofactor.

The protein resides in the cytoplasm. The enzyme catalyses adenosine(2503) in 23S rRNA + 2 reduced [2Fe-2S]-[ferredoxin] + 2 S-adenosyl-L-methionine = 2-methyladenosine(2503) in 23S rRNA + 5'-deoxyadenosine + L-methionine + 2 oxidized [2Fe-2S]-[ferredoxin] + S-adenosyl-L-homocysteine. The catalysed reaction is adenosine(37) in tRNA + 2 reduced [2Fe-2S]-[ferredoxin] + 2 S-adenosyl-L-methionine = 2-methyladenosine(37) in tRNA + 5'-deoxyadenosine + L-methionine + 2 oxidized [2Fe-2S]-[ferredoxin] + S-adenosyl-L-homocysteine. Specifically methylates position 2 of adenine 2503 in 23S rRNA and position 2 of adenine 37 in tRNAs. This is Probable dual-specificity RNA methyltransferase RlmN from Leptospira biflexa serovar Patoc (strain Patoc 1 / Ames).